Reading from the N-terminus, the 175-residue chain is Shikimate kinase (175 aa).

An ATP-binding site is contributed by 11–16; it reads GAGKTT. Threonine 15 contributes to the Mg(2+) binding site. Positions 33, 57, and 79 each coordinate substrate. Arginine 118 lines the ATP pocket. Arginine 140 provides a ligand contact to substrate.

This sequence belongs to the shikimate kinase family. Monomer. Mg(2+) is required as a cofactor.

The protein resides in the cytoplasm. It carries out the reaction shikimate + ATP = 3-phosphoshikimate + ADP + H(+). It functions in the pathway metabolic intermediate biosynthesis; chorismate biosynthesis; chorismate from D-erythrose 4-phosphate and phosphoenolpyruvate: step 5/7. Its function is as follows. Catalyzes the specific phosphorylation of the 3-hydroxyl group of shikimic acid using ATP as a cosubstrate. This is Shikimate kinase from Phocaeicola vulgatus (strain ATCC 8482 / DSM 1447 / JCM 5826 / CCUG 4940 / NBRC 14291 / NCTC 11154) (Bacteroides vulgatus).